The following is a 310-amino-acid chain: DnaJ-like protein MG002 (310 aa).

The region spanning 1 to 66 (MNLYDLLELP…KEKYDSMLKV (66 aa)) is the J domain.

The protein is DnaJ-like protein MG002 of Mycoplasma genitalium (strain ATCC 33530 / DSM 19775 / NCTC 10195 / G37) (Mycoplasmoides genitalium).